We begin with the raw amino-acid sequence, 52 residues long: Large ribosomal subunit protein eL39 (52 aa).

This sequence belongs to the eukaryotic ribosomal protein eL39 family.

The protein is Large ribosomal subunit protein eL39 (RPL39) of Tetrahymena thermophila (strain SB210).